A 707-amino-acid polypeptide reads, in one-letter code: DNA ligase (707 aa).

NAD(+) is bound by residues 48–52, 97–98, and Glu-134; these read DAEYD and SI. Lys-136 (N6-AMP-lysine intermediate) is an active-site residue. Residues Arg-157, Glu-193, Lys-320, and Lys-344 each coordinate NAD(+). Zn(2+)-binding residues include Cys-438, Cys-441, Cys-456, and Cys-462. The BRCT domain occupies 621–707; it reads VAPKPLSGKT…DSPPDERIPA (87 aa).

The protein belongs to the NAD-dependent DNA ligase family. LigA subfamily. The cofactor is Mg(2+). Mn(2+) is required as a cofactor.

It carries out the reaction NAD(+) + (deoxyribonucleotide)n-3'-hydroxyl + 5'-phospho-(deoxyribonucleotide)m = (deoxyribonucleotide)n+m + AMP + beta-nicotinamide D-nucleotide.. Functionally, DNA ligase that catalyzes the formation of phosphodiester linkages between 5'-phosphoryl and 3'-hydroxyl groups in double-stranded DNA using NAD as a coenzyme and as the energy source for the reaction. It is essential for DNA replication and repair of damaged DNA. The protein is DNA ligase of Polaromonas naphthalenivorans (strain CJ2).